The following is a 193-amino-acid chain: Acyl carrier protein phosphodiesterase (193 aa).

Belongs to the AcpH family.

It catalyses the reaction holo-[ACP] + H2O = apo-[ACP] + (R)-4'-phosphopantetheine + H(+). Converts holo-ACP to apo-ACP by hydrolytic cleavage of the phosphopantetheine prosthetic group from ACP. The sequence is that of Acyl carrier protein phosphodiesterase from Salmonella dublin (strain CT_02021853).